The primary structure comprises 263 residues: Endonuclease 8 (263 aa).

Pro-2 acts as the Schiff-base intermediate with DNA in catalysis. Residue Glu-3 is the Proton donor of the active site. Lys-53 acts as the Proton donor; for beta-elimination activity in catalysis. Positions 70, 125, and 169 each coordinate DNA. The FPG-type zinc finger occupies Lys-229 to Lys-263. Arg-253 functions as the Proton donor; for delta-elimination activity in the catalytic mechanism.

It belongs to the FPG family. Zn(2+) serves as cofactor.

It catalyses the reaction 2'-deoxyribonucleotide-(2'-deoxyribose 5'-phosphate)-2'-deoxyribonucleotide-DNA = a 3'-end 2'-deoxyribonucleotide-(2,3-dehydro-2,3-deoxyribose 5'-phosphate)-DNA + a 5'-end 5'-phospho-2'-deoxyribonucleoside-DNA + H(+). Its function is as follows. Involved in base excision repair of DNA damaged by oxidation or by mutagenic agents. Acts as a DNA glycosylase that recognizes and removes damaged bases. Has a preference for oxidized pyrimidines, such as thymine glycol, 5,6-dihydrouracil and 5,6-dihydrothymine. Has AP (apurinic/apyrimidinic) lyase activity and introduces nicks in the DNA strand. Cleaves the DNA backbone by beta-delta elimination to generate a single-strand break at the site of the removed base with both 3'- and 5'-phosphates. The sequence is that of Endonuclease 8 from Salmonella newport (strain SL254).